We begin with the raw amino-acid sequence, 40 residues long: Large ribosomal subunit protein bL36A (40 aa).

It belongs to the bacterial ribosomal protein bL36 family.

The polypeptide is Large ribosomal subunit protein bL36A (Paenarthrobacter aurescens (strain TC1)).